The chain runs to 124 residues: Alpha-amylase inhibitor 0.53 (124 aa).

Cystine bridges form between Cys-20-Cys-41, Cys-28-Cys-83, Cys-42-Cys-99, and Cys-54-Cys-115.

The protein belongs to the protease inhibitor I6 (cereal trypsin/alpha-amylase inhibitor) family. In terms of assembly, homodimer. Post-translationally, the disulfide bonds are essential for the inhibitor activity. Endosperm.

Its subcellular location is the secreted. Its function is as follows. Alpha-amylase inhibitor. This is Alpha-amylase inhibitor 0.53 from Triticum aestivum (Wheat).